We begin with the raw amino-acid sequence, 156 residues long: Small ribosomal subunit protein uS7 (156 aa).

This sequence belongs to the universal ribosomal protein uS7 family. As to quaternary structure, part of the 30S ribosomal subunit. Contacts proteins S9 and S11.

Functionally, one of the primary rRNA binding proteins, it binds directly to 16S rRNA where it nucleates assembly of the head domain of the 30S subunit. Is located at the subunit interface close to the decoding center, probably blocks exit of the E-site tRNA. This chain is Small ribosomal subunit protein uS7, found in Pseudomonas fluorescens (strain SBW25).